The sequence spans 238 residues: Ribosomal RNA small subunit methyltransferase G (238 aa).

S-adenosyl-L-methionine is bound by residues Gly77, Phe82, 128 to 129 (AE), and Arg147.

The protein belongs to the methyltransferase superfamily. RNA methyltransferase RsmG family.

The protein resides in the cytoplasm. Functionally, specifically methylates the N7 position of guanine in position 535 of 16S rRNA. This chain is Ribosomal RNA small subunit methyltransferase G, found in Exiguobacterium sp. (strain ATCC BAA-1283 / AT1b).